Here is a 243-residue protein sequence, read N- to C-terminus: Zinc import ATP-binding protein ZnuC (243 aa).

In terms of domain architecture, ABC transporter spans 4 to 219 (ITVENLSVRY…PEYRALFGTG (216 aa)). 36–43 (GPNGSGKT) contributes to the ATP binding site.

It belongs to the ABC transporter superfamily. Zinc importer (TC 3.A.1.15.5) family. As to quaternary structure, the complex is composed of two ATP-binding proteins (ZnuC), two transmembrane proteins (ZnuB) and a solute-binding protein (ZnuA).

The protein resides in the cell inner membrane. It carries out the reaction Zn(2+)(out) + ATP(in) + H2O(in) = Zn(2+)(in) + ADP(in) + phosphate(in) + H(+)(in). In terms of biological role, part of the ABC transporter complex ZnuABC involved in zinc import. Responsible for energy coupling to the transport system. This Jannaschia sp. (strain CCS1) protein is Zinc import ATP-binding protein ZnuC.